A 539-amino-acid chain; its full sequence is Membrane protein insertase YidC (539 aa).

The next 5 membrane-spanning stretches (helical) occupy residues 6–26, 341–361, 416–436, 454–474, and 495–515; these read TLLVLLLALVSFLLFQQWQVA, SVIQSFVGNWGVAIICLTFIV, LGGCLPLILQMPIFIALYWAL, LSAQDPYFILPLLMGGSMFLI, and PVMFTFFFLWFPSGLVLYWLV.

It belongs to the OXA1/ALB3/YidC family. Type 1 subfamily. In terms of assembly, interacts with the Sec translocase complex via SecD. Specifically interacts with transmembrane segments of nascent integral membrane proteins during membrane integration.

It localises to the cell inner membrane. Functionally, required for the insertion and/or proper folding and/or complex formation of integral membrane proteins into the membrane. Involved in integration of membrane proteins that insert both dependently and independently of the Sec translocase complex, as well as at least some lipoproteins. Aids folding of multispanning membrane proteins. This chain is Membrane protein insertase YidC, found in Vibrio vulnificus (strain YJ016).